Here is a 966-residue protein sequence, read N- to C-terminus: Regulator of G-protein signaling 3 (966 aa).

One can recognise a PDZ domain in the interval 18–95 (QITIRRGKDG…EIILLVWRVV (78 aa)). Positions 115–135 (THDLLSPPNKREKNCTHGAPV) are disordered. Omega-N-methylarginine is present on arginine 167. Disordered regions lie at residues 403–618 (EADE…TGAV) and 637–704 (YSQL…RVQN). 2 stretches are compositionally biased toward polar residues: residues 527-548 (PETSTSKDSPPGQGSSPTTELP) and 576-594 (SSASVQKRLPSQESPSSLG). Over residues 649 to 675 (GEDEDAEEGEEGGEGEEDEEDDTSDDN) the composition is skewed to acidic residues. Residues 676 to 686 (YGDRSEAKRSS) are compositionally biased toward basic and acidic residues. A phosphoserine mark is found at serine 712, serine 715, serine 747, and serine 776. The interval 806-830 (FRRRNESPGAQPASKTDKTTKSFKP) is disordered. The span at 820-830 (KTDKTTKSFKP) shows a compositional bias: basic and acidic residues. In terms of domain architecture, RGS spans 841–966 (SLEKLLLHKY…INQKKMSPPL (126 aa)).

As to quaternary structure, binds the GNB1-GNG2 heterodimer. Binds EFNB1 and EFNB2. Phosphorylated by cyclic GMP-dependent protein kinase. In terms of processing, ISGylated. In terms of tissue distribution, detected in embryos from E8.5-16.5 in cortical ventricular zone, dorsal root ganglia and cerebellar primordia. Isoform 3 is detected in testis and in spermatocytes from newborn mice. Levels increase and reach a maximum after 21 days; after this they decrease again. Long isoforms are widely expressed.

Its subcellular location is the cytoplasm. The protein localises to the cell membrane. The protein resides in the nucleus. Down-regulates signaling from heterotrimeric G-proteins by increasing the GTPase activity of the alpha subunits, thereby driving them into their inactive GDP-bound form. Down-regulates G-protein-mediated release of inositol phosphates and activation of MAP kinases. This chain is Regulator of G-protein signaling 3 (Rgs3), found in Mus musculus (Mouse).